A 321-amino-acid chain; its full sequence is MSTDYLTLNRTGDKMPIRGFGCWKIDTKDCEETVYQAIKTGYRLFDGACDYGNEVEVGRGINKAINEGLVKREDLFIVTKLWNTFHSKKHVRALFDRQLKDTGLEYFDLYLIHFPVPLQYVDPATVYPPGWYVGDAKSLQFEQSPIHECWAELEKIVDAGLARNIGVANFNCQAILDLLTYARIKPAVLQIELHPYLPQERLVKWVKEQGIQITAYSSFGPTSYVDLTESGKTYTSLLEHASVKSVADKHNVSTGQVLLRWALDREFAVIPKSVNAGRMKANLEILDIKLDAEDNKTLDSLKTNQRFNDPMTYGFGLPLFD.

Y51 functions as the Proton donor in the catalytic mechanism. A substrate-binding site is contributed by H113.

The protein belongs to the aldo/keto reductase family.

Its pathway is pheromone biosynthesis; trisporate biosynthesis. Catalyzes the NADP-dependent oxidation of (+) mating-type specific precursor 4-dihydromethyl-trisporate to methyl-trisporate. The chain is 4-dihydromethyl-trisporate dehydrogenase (tdh) from Mucor mucedo (Common pinmould).